The sequence spans 83 residues: Apolipoprotein C-I (83 aa).

Positions 1-26 are cleaved as a signal peptide; sequence MRLFLSLPVLVVVLSIVLEGPAPAQG.

It belongs to the apolipoprotein C1 family. In terms of tissue distribution, synthesized mainly in liver and to a minor degree in intestine. Also found in the lung and spleen.

It localises to the secreted. Inhibitor of lipoprotein binding to the low density lipoprotein (LDL) receptor, LDL receptor-related protein, and very low density lipoprotein (VLDL) receptor. Associates with high density lipoproteins (HDL) and the triacylglycerol-rich lipoproteins in the plasma and makes up about 10% of the protein of the VLDL and 2% of that of HDL. Appears to interfere directly with fatty acid uptake and is also the major plasma inhibitor of cholesteryl ester transfer protein (CETP). Binds free fatty acids and reduces their intracellular esterification. Modulates the interaction of APOE with beta-migrating VLDL and inhibits binding of beta-VLDL to the LDL receptor-related protein. This Homo sapiens (Human) protein is Apolipoprotein C-I (APOC1).